Reading from the N-terminus, the 1370-residue chain is Major capsid protein (1370 aa).

The protein belongs to the herpesviridae major capsid protein family. In terms of assembly, homomultimer. Makes the hexons and eleven out of twelve pentons. Interacts with triplex proteins 1/TRX1 and 2/TRX2; adjacent capsomers are linked together in groups of three by triplexes, heterotrimeric complexes composed of one molecule of TRX1 and two molecules of TRX2. Interacts with scaffold protein; this interaction allows efficient MCP transport to the host nucleus. Interacts with capsid vertex component 2/CVC2. Interacts with the small capsomere-interacting protein/SCP.

The protein localises to the virion. Its subcellular location is the host nucleus. Functionally, self-assembles to form an icosahedral capsid with a T=16 symmetry, about 200 nm in diameter, and consisting of 150 hexons and 12 pentons (total of 162 capsomers). Hexons form the edges and faces of the capsid and are each composed of six MCP molecules. In contrast, one penton is found at each of the 12 vertices. Eleven of the pentons are MCP pentamers, while the last vertex is occupied by the portal complex. The capsid is surrounded by a layer of proteinaceous material designated the tegument which, in turn, is enclosed in an envelope of host cell-derived lipids containing virus-encoded glycoproteins. In Human cytomegalovirus (strain AD169) (HHV-5), this protein is Major capsid protein.